The chain runs to 279 residues: 4-diphosphocytidyl-2-C-methyl-D-erythritol kinase (279 aa).

Lys-11 is an active-site residue. 95–105 (PVAAGLGGGSS) provides a ligand contact to ATP. Residue Asp-137 is part of the active site.

This sequence belongs to the GHMP kinase family. IspE subfamily.

It catalyses the reaction 4-CDP-2-C-methyl-D-erythritol + ATP = 4-CDP-2-C-methyl-D-erythritol 2-phosphate + ADP + H(+). The protein operates within isoprenoid biosynthesis; isopentenyl diphosphate biosynthesis via DXP pathway; isopentenyl diphosphate from 1-deoxy-D-xylulose 5-phosphate: step 3/6. Its function is as follows. Catalyzes the phosphorylation of the position 2 hydroxy group of 4-diphosphocytidyl-2C-methyl-D-erythritol. The chain is 4-diphosphocytidyl-2-C-methyl-D-erythritol kinase from Geotalea daltonii (strain DSM 22248 / JCM 15807 / FRC-32) (Geobacter daltonii).